We begin with the raw amino-acid sequence, 78 residues long: Acyl carrier protein (78 aa).

One can recognise a Carrier domain in the interval 2 to 77 (STIEERVKKI…AAIDYIEAAN (76 aa)). Ser-37 bears the O-(pantetheine 4'-phosphoryl)serine mark.

The protein belongs to the acyl carrier protein (ACP) family. Post-translationally, 4'-phosphopantetheine is transferred from CoA to a specific serine of apo-ACP by AcpS. This modification is essential for activity because fatty acids are bound in thioester linkage to the sulfhydryl of the prosthetic group.

It is found in the cytoplasm. It functions in the pathway lipid metabolism; fatty acid biosynthesis. Its function is as follows. Carrier of the growing fatty acid chain in fatty acid biosynthesis. This chain is Acyl carrier protein, found in Edwardsiella ictaluri (strain 93-146).